The sequence spans 455 residues: MDLAFSTEENIAAIASAVAPGQGAIAIVKVSGASAKEVVKNVVRTPSNKIWSSHKILYGHVIDKSTKKNIDEVLILIMDGPRSFTGEDVVEIHCHGGLIVVQQVLDAILKQPKTRRAFPGEFSQRAVLNGRLDITQAEAINDLIHARSQKAAQLAIAGIDGDITNKINYLREKLLDQLSEIEARIDFEEDLPKLNSKKLLTDLMLIRAELKQLINDAKQGSLIRNGLKVALVGLPNVGKSSILNLLSKHERAIVTDLPGTTRDLLESEIILEGVPITLIDTAGIRETNNEIEKIGVSLSQKTLFTADIVVLIFDLSKGWNKNDQNLLEKIPKGTPTLIIGNKADLKSQSTNIQPHATMTAITGEGEKELIQELLKLAGANELEGIEVALNQRQLDLVKVAVNALDQIEKVAAESLAWDFWTIDLREAIYKLGELTGEEVTEALLDRIFSRFCIGK.

Residues lysine 29, glutamate 91, and arginine 131 each coordinate (6S)-5-formyl-5,6,7,8-tetrahydrofolate. The TrmE-type G domain occupies 226–378; that stretch reads GLKVALVGLP…LIQELLKLAG (153 aa). Residue asparagine 236 participates in K(+) binding. GTP-binding positions include 236–241, 255–261, 280–283, and 341–344; these read NVGKSS, TDLPGTT, DTAG, and NKAD. Serine 240 contacts Mg(2+). K(+) contacts are provided by threonine 255, leucine 257, and threonine 260. Mg(2+) is bound at residue threonine 261. Residue lysine 455 coordinates (6S)-5-formyl-5,6,7,8-tetrahydrofolate.

This sequence belongs to the TRAFAC class TrmE-Era-EngA-EngB-Septin-like GTPase superfamily. TrmE GTPase family. In terms of assembly, homodimer. Heterotetramer of two MnmE and two MnmG subunits. Requires K(+) as cofactor.

The protein localises to the cytoplasm. Exhibits a very high intrinsic GTPase hydrolysis rate. Involved in the addition of a carboxymethylaminomethyl (cmnm) group at the wobble position (U34) of certain tRNAs, forming tRNA-cmnm(5)s(2)U34. The protein is tRNA modification GTPase MnmE of Prochlorococcus marinus (strain SARG / CCMP1375 / SS120).